The following is a 153-amino-acid chain: Putative transmembrane protein INAFM2 (153 aa).

Basic and acidic residues predominate over residues M1 to A23. Residues M1 to K24 form a disordered region. The helical transmembrane segment at L36–Y56 threads the bilayer. The segment at A66–R153 is disordered. Over residues G79 to S101 the composition is skewed to low complexity. Over residues P118–G131 the composition is skewed to pro residues.

The protein localises to the membrane. The chain is Putative transmembrane protein INAFM2 from Homo sapiens (Human).